We begin with the raw amino-acid sequence, 286 residues long: Protein METABOLIC NETWORK MODULATOR 1 (286 aa).

Residues 1-10 show a composition bias toward basic and acidic residues; the sequence is MEKESHEENN. 3 disordered regions span residues 1-60, 123-146, and 181-204; these read MEKE…DDEA, VMHH…GSGV, and GGER…SGAS. Residues 20 to 29 show a composition bias toward basic residues; that stretch reads KRKRGRPRKQ. Residues 30–39 are compositionally biased toward basic and acidic residues; it reads LKLESNEHSL. Over residues 131–140 the composition is skewed to basic residues; it reads KRGRKSRFRE. The span at 191 to 204 shows a compositional bias: polar residues; the sequence is PMQTETGSQASGAS.

As to expression, mailny observed in young seedlings and in emerging leaves.

In terms of biological role, lineage-specific modulator of primary metabolism. Influences flowering time. This chain is Protein METABOLIC NETWORK MODULATOR 1, found in Arabidopsis thaliana (Mouse-ear cress).